The chain runs to 329 residues: Sialic acid-binding periplasmic protein SiaP (329 aa).

The first 23 residues, 1–23 (MMKLTKLFLATAISLGVSSAVLA), serve as a signal peptide directing secretion. Residues Asn-33, Asp-72, Glu-90, Arg-150, Arg-170, and Asn-210 each contribute to the N-acetyl-beta-neuraminate site.

This sequence belongs to the bacterial solute-binding protein 7 family. In terms of assembly, the complex comprises the extracytoplasmic solute receptor protein SiaP, and the fused transmembrane protein SiaT.

It is found in the periplasm. Functionally, part of the tripartite ATP-independent periplasmic (TRAP) transport system SiaPT involved in the uptake of sialic acid (N-acetyl-beta-neuraminate). This protein specifically binds sialic acid with high affinity. N-Acetylneuraminate (sialic acid) can then be incorporated into the lipooligosaccharides (LOS) as a terminal non-reducing sugar, protecting the bacterium from complement-mediated killing by normal human serum. The polypeptide is Sialic acid-binding periplasmic protein SiaP (siaP) (Haemophilus influenzae (strain ATCC 51907 / DSM 11121 / KW20 / Rd)).